We begin with the raw amino-acid sequence, 31 residues long: Cytochrome b6-f complex subunit 6 (31 aa).

The helical transmembrane segment at I4–G24 threads the bilayer.

It belongs to the PetL family. The 4 large subunits of the cytochrome b6-f complex are cytochrome b6, subunit IV (17 kDa polypeptide, PetD), cytochrome f and the Rieske protein, while the 4 small subunits are PetG, PetL, PetM and PetN. The complex functions as a dimer.

It localises to the plastid. The protein resides in the chloroplast thylakoid membrane. In terms of biological role, component of the cytochrome b6-f complex, which mediates electron transfer between photosystem II (PSII) and photosystem I (PSI), cyclic electron flow around PSI, and state transitions. PetL is important for photoautotrophic growth as well as for electron transfer efficiency and stability of the cytochrome b6-f complex. The sequence is that of Cytochrome b6-f complex subunit 6 from Marchantia polymorpha (Common liverwort).